A 148-amino-acid polypeptide reads, in one-letter code: Deoxyuridine 5'-triphosphate nucleotidohydrolase (148 aa).

Residues 67 to 69 (RSG), Asn-80, 84 to 86 (LID), and Met-94 contribute to the substrate site.

The protein belongs to the dUTPase family. Requires Mg(2+) as cofactor.

It carries out the reaction dUTP + H2O = dUMP + diphosphate + H(+). The protein operates within pyrimidine metabolism; dUMP biosynthesis; dUMP from dCTP (dUTP route): step 2/2. This enzyme is involved in nucleotide metabolism: it produces dUMP, the immediate precursor of thymidine nucleotides and it decreases the intracellular concentration of dUTP so that uracil cannot be incorporated into DNA. This Burkholderia cenocepacia (strain ATCC BAA-245 / DSM 16553 / LMG 16656 / NCTC 13227 / J2315 / CF5610) (Burkholderia cepacia (strain J2315)) protein is Deoxyuridine 5'-triphosphate nucleotidohydrolase.